Consider the following 185-residue polypeptide: NAD(P)H-dependent FAD/FMN reductase GTNG_3158 (185 aa).

Anthranilate 3-monooxygenase consists of a reductase component (GTNG_3158) and an oxygenase component HpaH.

It carries out the reaction FADH2 + NAD(+) = FAD + NADH + 2 H(+). The catalysed reaction is FADH2 + NADP(+) = FAD + NADPH + 2 H(+). Functionally, involved in the pathway of tryptophan degradation. Reduces FAD/FMN to FADH(2)/FMNH(2), which are subsequently used for the hydroxylation of anthranilate. It can reduce either FAD or flavin mononucleotide (FMN) but prefers FAD. The enzyme has a slight preference for NADPH as acceptor. The protein is NAD(P)H-dependent FAD/FMN reductase GTNG_3158 of Geobacillus thermodenitrificans (strain NG80-2).